The primary structure comprises 290 residues: Fructose-bisphosphate aldolase (290 aa).

A D-glyceraldehyde 3-phosphate-binding site is contributed by S51. The Proton donor role is filled by D86. Zn(2+) contacts are provided by H87, D107, E137, and H179. Position 180 (G180) interacts with dihydroxyacetone phosphate. Residue H208 participates in Zn(2+) binding. Residues 209–211 and 230–233 each bind dihydroxyacetone phosphate; these read GGS and NINT.

Belongs to the class II fructose-bisphosphate aldolase family. As to quaternary structure, homodimer. The cofactor is Zn(2+).

It catalyses the reaction beta-D-fructose 1,6-bisphosphate = D-glyceraldehyde 3-phosphate + dihydroxyacetone phosphate. It participates in carbohydrate degradation; glycolysis; D-glyceraldehyde 3-phosphate and glycerone phosphate from D-glucose: step 4/4. Its function is as follows. Catalyzes the aldol condensation of dihydroxyacetone phosphate (DHAP or glycerone-phosphate) with glyceraldehyde 3-phosphate (G3P) to form fructose 1,6-bisphosphate (FBP) in gluconeogenesis and the reverse reaction in glycolysis. The polypeptide is Fructose-bisphosphate aldolase (fba) (Ureaplasma parvum serovar 3 (strain ATCC 700970)).